A 69-amino-acid polypeptide reads, in one-letter code: Pleurain-A3 (69 aa).

The first 22 residues, 1 to 22, serve as a signal peptide directing secretion; that stretch reads MFTLKKTLLLLFFLGTISISLC. The propeptide occupies 23–43; that stretch reads KQARDADEDDGRKMTEEEVKR. A disulfide bridge connects residues Cys63 and Cys69.

This sequence belongs to the frog skin active peptide (FSAP) family. Pleurain subfamily. Expressed by the skin glands.

The protein localises to the secreted. Antimicrobial peptide. Has activity against Gram-positive and -negative bacteria, and fungi. Has little hemolytic activity on red blood cells. This Nidirana pleuraden (Yunnan pond frog) protein is Pleurain-A3.